We begin with the raw amino-acid sequence, 142 residues long: Peptide methionine sulfoxide reductase MsrB (142 aa).

Residues 3-126 enclose the MsrB domain; the sequence is KEKLKKKLSL…NSAALRFVPF (124 aa). The active-site Nucleophile is C115.

Belongs to the MsrB Met sulfoxide reductase family.

The enzyme catalyses L-methionyl-[protein] + [thioredoxin]-disulfide + H2O = L-methionyl-(R)-S-oxide-[protein] + [thioredoxin]-dithiol. This chain is Peptide methionine sulfoxide reductase MsrB, found in Lactococcus lactis subsp. lactis (strain IL1403) (Streptococcus lactis).